The chain runs to 502 residues: Glycerol kinase (502 aa).

An ADP-binding site is contributed by Thr14. Positions 14, 15, and 16 each coordinate ATP. Residue Thr14 coordinates sn-glycerol 3-phosphate. Residue Arg18 participates in ADP binding. Sn-glycerol 3-phosphate-binding residues include Arg84, Glu85, Tyr136, and Asp246. Arg84, Glu85, Tyr136, Asp246, and Gln247 together coordinate glycerol. ADP contacts are provided by Thr268 and Gly311. Thr268, Gly311, Gln315, and Gly412 together coordinate ATP. 2 residues coordinate ADP: Gly412 and Asn416.

It belongs to the FGGY kinase family. In terms of assembly, homotetramer and homodimer (in equilibrium). Heterodimer with EIIA-Glc. Binds 1 zinc ion per glycerol kinase EIIA-Glc dimer. The zinc ion is important for dimerization.

It catalyses the reaction glycerol + ATP = sn-glycerol 3-phosphate + ADP + H(+). It functions in the pathway polyol metabolism; glycerol degradation via glycerol kinase pathway; sn-glycerol 3-phosphate from glycerol: step 1/1. With respect to regulation, activity of this regulatory enzyme is affected by several metabolites. Allosterically and non-competitively inhibited by fructose 1,6-bisphosphate (FBP) and unphosphorylated phosphocarrier protein EIIA-Glc (III-Glc), an integral component of the bacterial phosphotransferase (PTS) system. In terms of biological role, key enzyme in the regulation of glycerol uptake and metabolism. Catalyzes the phosphorylation of glycerol to yield sn-glycerol 3-phosphate. The chain is Glycerol kinase from Escherichia coli O127:H6 (strain E2348/69 / EPEC).